The following is a 363-amino-acid chain: Zinc finger protein 830 (363 aa).

An N-acetylalanine modification is found at Ala2. Residues 16–40 (VNQEELRRLMREKQRLSTNRKRIES) are a coiled coil. A C2H2-type zinc finger spans residues 53–75 (CALCNTPVKSELLWQTHVLGKQH). Residues 81–213 (ELKGAKGATQ…NPPKAPLVPH (133 aa)) are disordered. The span at 90–99 (QGPSTGTVPQ) shows a compositional bias: polar residues. A compositionally biased stretch (basic and acidic residues) spans 104–115 (RATDVESQDAKK). Positions 129 to 143 (SASSANLDAARAAPS) are enriched in low complexity. Residues 152 to 164 (DYDDEEEEEEEGG) show a composition bias toward acidic residues. Over residues 165–184 (GEERRDSSKHLPDAQGKEHS) the composition is skewed to basic and acidic residues. Polar residues predominate over residues 189–205 (RETTSNVLPNDPFNTNP). At Ser216 the chain carries Phosphoserine. Residues 303–331 (IECYRRVEKLRNRQDEIKNKLKEVLTIKE) adopt a coiled-coil conformation. Ser342 and Ser353 each carry phosphoserine.

Component of the XAB2 complex, a multimeric protein complex composed of XAB2, PRPF19, AQR, ZNF830, ISY1, and PPIE; this complex binds preferentially to RNA. Interacts with XAB2. Identified in a pentameric intron-binding (IB) complex composed of AQR, XAB2, ISY1, ZNF830 and PPIE that is incorporated into the spliceosome as a preassembled complex. The IB complex does not contain PRPF19. In terms of processing, phosphorylated in response to DNA damage by the cell cycle checkpoint kinases ATR/ATM. In terms of tissue distribution, widely expressed at low level. Expressed in oocytes from primordial to antral follicles. Also detected in somatic cells of the ovary, namely, in granulosa cells from the pre-antral follicle stage onward.

It is found in the nucleus. The protein resides in the chromosome. Its subcellular location is the nucleus speckle. Functionally, may play a role in pre-mRNA splicing as component of the spliceosome. Acts as an important regulator of the cell cycle that participates in the maintenance of genome integrity. During cell cycle progression in embryonic fibroblast, prevents replication fork collapse, double-strand break formation and cell cycle checkpoint activation. Controls mitotic cell cycle progression and cell survival in rapidly proliferating intestinal epithelium and embryonic stem cells. During the embryo preimplantation, controls different aspects of M phase. During early oocyte growth, plays a role in oocyte survival by preventing chromosomal breaks formation, activation of TP63 and reduction of transcription. This chain is Zinc finger protein 830, found in Mus musculus (Mouse).